The sequence spans 374 residues: Ribosomal RNA large subunit methyltransferase M (374 aa).

S-adenosyl-L-methionine-binding positions include Ser188, 221–224 (CPGG), Asp240, Asp260, and Asp276. Lys305 acts as the Proton acceptor in catalysis.

It belongs to the class I-like SAM-binding methyltransferase superfamily. RNA methyltransferase RlmE family. RlmM subfamily. As to quaternary structure, monomer.

It localises to the cytoplasm. It carries out the reaction cytidine(2498) in 23S rRNA + S-adenosyl-L-methionine = 2'-O-methylcytidine(2498) in 23S rRNA + S-adenosyl-L-homocysteine + H(+). Catalyzes the 2'-O-methylation at nucleotide C2498 in 23S rRNA. This is Ribosomal RNA large subunit methyltransferase M from Edwardsiella ictaluri (strain 93-146).